The chain runs to 141 residues: Vesicle-associated membrane protein 4 (141 aa).

The disordered stretch occupies residues M1 to D51. At M1–K115 the chain is on the cytoplasmic side. Residues S17 and S30 each carry the phosphoserine modification. The v-SNARE coiled-coil homology domain maps to K52–R112. A helical; Anchor for type IV membrane protein membrane pass occupies residues I116 to V136. Over V137–T141 the chain is Vesicular.

This sequence belongs to the synaptobrevin family. As to quaternary structure, identified in a complex containing STX6, STX12, VAMP4 and VTI1A. Interacts with BAIAP3; this interaction is increased in the presence of calcium.

Its subcellular location is the golgi apparatus. The protein resides in the trans-Golgi network membrane. In terms of biological role, involved in the pathway that functions to remove an inhibitor (probably synaptotagmin-4) of calcium-triggered exocytosis during the maturation of secretory granules. May be a marker for this sorting pathway that is critical for remodeling the secretory response of granule. This Bos taurus (Bovine) protein is Vesicle-associated membrane protein 4 (VAMP4).